The chain runs to 382 residues: Mannitol-1-phosphate 5-dehydrogenase (382 aa).

3–14 (ALHFGAGNIGRG) is a binding site for NAD(+).

The protein belongs to the mannitol dehydrogenase family.

It carries out the reaction D-mannitol 1-phosphate + NAD(+) = beta-D-fructose 6-phosphate + NADH + H(+). The chain is Mannitol-1-phosphate 5-dehydrogenase from Tolumonas auensis (strain DSM 9187 / NBRC 110442 / TA 4).